A 129-amino-acid chain; its full sequence is Small ribosomal subunit protein uS11 (129 aa).

The protein belongs to the universal ribosomal protein uS11 family. Part of the 30S ribosomal subunit. Interacts with proteins S7 and S18. Binds to IF-3.

Its function is as follows. Located on the platform of the 30S subunit, it bridges several disparate RNA helices of the 16S rRNA. Forms part of the Shine-Dalgarno cleft in the 70S ribosome. In Bacteroides thetaiotaomicron (strain ATCC 29148 / DSM 2079 / JCM 5827 / CCUG 10774 / NCTC 10582 / VPI-5482 / E50), this protein is Small ribosomal subunit protein uS11.